The chain runs to 175 residues: Large ribosomal subunit protein uL6 (175 aa).

This sequence belongs to the universal ribosomal protein uL6 family. As to quaternary structure, part of the 50S ribosomal subunit.

This protein binds to the 23S rRNA, and is important in its secondary structure. It is located near the subunit interface in the base of the L7/L12 stalk, and near the tRNA binding site of the peptidyltransferase center. This Xanthomonas axonopodis pv. citri (strain 306) protein is Large ribosomal subunit protein uL6.